Reading from the N-terminus, the 35-residue chain is Putative gastric cancer-related gene 224 protein (35 aa).

Expressed in gastric mucosa.

The sequence is that of Putative gastric cancer-related gene 224 protein (GCRG224) from Homo sapiens (Human).